A 274-amino-acid polypeptide reads, in one-letter code: 5'-3' exoribonuclease (274 aa).

Mn(2+) is bound by residues H8, H10, D15, H40, E65, H76, H190, D247, and H249.

This sequence belongs to the PHP family. TrpH/YciV subfamily. Mn(2+) serves as cofactor.

It carries out the reaction a ribonucleoside 3',5'-bisphosphate + H2O = a ribonucleoside 5'-phosphate + phosphate. In terms of biological role, efficiently catalyzes the hydrolysis of the 3'-phosphate from 3',5'-bis-phosphonucleotides as well as the successive hydrolysis of 5'-phosphomononucleotides from the 5'-end of short pieces of RNA and DNA, with no specificity toward the identity of the nucleotide base. Is more efficient at hydrolyzing RNA oligonucleotides than DNA oligonucleotides. This enzyme can also hydrolyze annealed DNA duplexes, albeit at a catalytic efficiency lower than that of the corresponding single-stranded oligonucleotides. The chain is 5'-3' exoribonuclease from Haemophilus influenzae (strain ATCC 51907 / DSM 11121 / KW20 / Rd).